A 354-amino-acid polypeptide reads, in one-letter code: 3-dehydroquinate synthase (354 aa).

NAD(+) contacts are provided by residues 69–74 (DGEAEK), 103–107 (GVIGD), 127–128 (TS), Lys-140, and Lys-149. Positions 182, 245, and 262 each coordinate Zn(2+).

This sequence belongs to the sugar phosphate cyclases superfamily. Dehydroquinate synthase family. Requires Co(2+) as cofactor. It depends on Zn(2+) as a cofactor. The cofactor is NAD(+).

The protein resides in the cytoplasm. The catalysed reaction is 7-phospho-2-dehydro-3-deoxy-D-arabino-heptonate = 3-dehydroquinate + phosphate. Its pathway is metabolic intermediate biosynthesis; chorismate biosynthesis; chorismate from D-erythrose 4-phosphate and phosphoenolpyruvate: step 2/7. Functionally, catalyzes the conversion of 3-deoxy-D-arabino-heptulosonate 7-phosphate (DAHP) to dehydroquinate (DHQ). The polypeptide is 3-dehydroquinate synthase (Colwellia psychrerythraea (strain 34H / ATCC BAA-681) (Vibrio psychroerythus)).